Consider the following 488-residue polypeptide: Protein unzipped (488 aa).

An N-terminal signal peptide occupies residues 1 to 21; that stretch reads MTSNSCLISLGLLLVLIQILA. Residues 22–465 lie on the Extracellular side of the membrane; that stretch reads PAKAAEHSVF…DVALAGFGVN (444 aa). Asn35, Asn232, Asn317, and Asn374 each carry an N-linked (GlcNAc...) asparagine glycan. The segment covering 380 to 400 has biased composition (low complexity); it reads TTTTTTTTSTSTTTHATTTST. The interval 380–453 is disordered; it reads TTTTTTTTST…EAPENMSSDP (74 aa). A glycan (N-linked (GlcNAc...) asparagine) is linked at Asn448. A helical membrane pass occupies residues 466-486; it reads AAGSTFIAGSALLTLLLTIFL. The Cytoplasmic segment spans residues 487–488; it reads SL.

The protein localises to the membrane. Functionally, required for normal axon patterning during neurogenesis. This is Protein unzipped (uzip) from Drosophila melanogaster (Fruit fly).